The sequence spans 372 residues: Aminomethyltransferase (372 aa).

The protein belongs to the GcvT family. In terms of assembly, the glycine cleavage system is composed of four proteins: P, T, L and H.

The enzyme catalyses N(6)-[(R)-S(8)-aminomethyldihydrolipoyl]-L-lysyl-[protein] + (6S)-5,6,7,8-tetrahydrofolate = N(6)-[(R)-dihydrolipoyl]-L-lysyl-[protein] + (6R)-5,10-methylene-5,6,7,8-tetrahydrofolate + NH4(+). Its function is as follows. The glycine cleavage system catalyzes the degradation of glycine. The polypeptide is Aminomethyltransferase (Burkholderia multivorans (strain ATCC 17616 / 249)).